We begin with the raw amino-acid sequence, 236 residues long: Pyridoxine 5'-phosphate synthase (236 aa).

Position 6 (Asn-6) interacts with 3-amino-2-oxopropyl phosphate. 8-9 (DH) serves as a coordination point for 1-deoxy-D-xylulose 5-phosphate. Arg-17 is a binding site for 3-amino-2-oxopropyl phosphate. The active-site Proton acceptor is the His-42. Residues Arg-44 and His-49 each coordinate 1-deoxy-D-xylulose 5-phosphate. Glu-69 acts as the Proton acceptor in catalysis. Thr-99 is a 1-deoxy-D-xylulose 5-phosphate binding site. His-190 acts as the Proton donor in catalysis. 3-amino-2-oxopropyl phosphate-binding positions include Gly-191 and 212–213 (GH).

This sequence belongs to the PNP synthase family. In terms of assembly, homooctamer; tetramer of dimers.

It is found in the cytoplasm. It catalyses the reaction 3-amino-2-oxopropyl phosphate + 1-deoxy-D-xylulose 5-phosphate = pyridoxine 5'-phosphate + phosphate + 2 H2O + H(+). It functions in the pathway cofactor biosynthesis; pyridoxine 5'-phosphate biosynthesis; pyridoxine 5'-phosphate from D-erythrose 4-phosphate: step 5/5. Catalyzes the complicated ring closure reaction between the two acyclic compounds 1-deoxy-D-xylulose-5-phosphate (DXP) and 3-amino-2-oxopropyl phosphate (1-amino-acetone-3-phosphate or AAP) to form pyridoxine 5'-phosphate (PNP) and inorganic phosphate. The chain is Pyridoxine 5'-phosphate synthase from Pelodictyon phaeoclathratiforme (strain DSM 5477 / BU-1).